Here is a 361-residue protein sequence, read N- to C-terminus: 3-dehydroquinate synthase (361 aa).

NAD(+)-binding positions include 72–77 (SGEKEK), 130–131 (TT), lysine 142, and lysine 151. 3 residues coordinate Zn(2+): glutamate 184, histidine 247, and histidine 264.

The protein belongs to the sugar phosphate cyclases superfamily. Dehydroquinate synthase family. Requires Co(2+) as cofactor. It depends on Zn(2+) as a cofactor. The cofactor is NAD(+).

The protein resides in the cytoplasm. It carries out the reaction 7-phospho-2-dehydro-3-deoxy-D-arabino-heptonate = 3-dehydroquinate + phosphate. It participates in metabolic intermediate biosynthesis; chorismate biosynthesis; chorismate from D-erythrose 4-phosphate and phosphoenolpyruvate: step 2/7. In terms of biological role, catalyzes the conversion of 3-deoxy-D-arabino-heptulosonate 7-phosphate (DAHP) to dehydroquinate (DHQ). The chain is 3-dehydroquinate synthase from Bacillus cereus (strain G9842).